A 202-amino-acid polypeptide reads, in one-letter code: Small ribosomal subunit protein uS4 (202 aa).

Residues 15–42 (LGDLPGLTRKAAKRSYPPGQHGQARRKR) form a disordered region. The S4 RNA-binding domain occupies 90–152 (NRLDNVCFRL…KCSKQLAEGN (63 aa)).

This sequence belongs to the universal ribosomal protein uS4 family. In terms of assembly, part of the 30S ribosomal subunit. Contacts protein S5. The interaction surface between S4 and S5 is involved in control of translational fidelity.

Its function is as follows. One of the primary rRNA binding proteins, it binds directly to 16S rRNA where it nucleates assembly of the body of the 30S subunit. With S5 and S12 plays an important role in translational accuracy. The protein is Small ribosomal subunit protein uS4 of Synechococcus sp. (strain WH7803).